The chain runs to 2458 residues: Acetyl-CoA carboxylase 2 (2458 aa).

The residue at position 35 (serine 35) is a Phosphoserine. Residues 35-155 are disordered; that stretch reads SKSEANLIPS…SPSKEDKKQA (121 aa). Residues 51–60 are compositionally biased toward polar residues; sequence SDNSGETPQR. Threonine 70 carries the post-translational modification Phosphothreonine. The span at 77–87 shows a compositional bias: basic and acidic residues; it reads ASHKGPKDAGR. Phosphoserine occurs at positions 91 and 95. A compositionally biased stretch (polar residues) spans 103-146; sequence PLSSSDAAPSPELQANGTGTQGLEATDTNGLSSSARPQGQQAGS. Phosphoserine is present on residues serine 169, serine 175, serine 192, serine 195, and serine 200. The interval 174–193 is disordered; it reads SSDEDSVAGSSRESTRKGSR. Threonine 207 is subject to Phosphothreonine. A Phosphoserine modification is found at serine 220. Phosphoserine; by AMPK is present on serine 222. Residues 259–761 enclose the Biotin carboxylation domain; the sequence is VIEKVLIANN…DTGWLDYLIA (503 aa). One can recognise an ATP-grasp domain in the interval 414 to 609; sequence DDLQQGKRIS…LPAAQLQIAM (196 aa). 458-463 provides a ligand contact to ATP; it reads GGGGKG. At serine 469 the chain carries Phosphoserine. Mg(2+) contacts are provided by glutamate 567, glutamate 580, and asparagine 582. Residues glutamate 567, glutamate 580, and asparagine 582 each coordinate Mn(2+). Residue arginine 584 is part of the active site. Position 753 is a phosphothreonine (threonine 753). Residues 888 to 962 enclose the Biotinyl-binding domain; that stretch reads FEKENDPTVL…EAGCVVARLE (75 aa). Lysine 929 is subject to N6-biotinyllysine. Serine 1340 is modified (phosphoserine). At threonine 1342 the chain carries Phosphothreonine. Residues serine 1360 and serine 1405 each carry the phosphoserine modification. In terms of domain architecture, CoA carboxyltransferase N-terminal spans 1695–2025; it reads PYVTKDLLQA…DNHSPVPIIT (331 aa). Residues 1695–2345 are carboxyltransferase; sequence PYVTKDLLQA…EDQVKQEILQ (651 aa). CoA is bound by residues arginine 1934, lysine 2238, and arginine 2240. The region spanning 2029-2345 is the CoA carboxyltransferase C-terminal domain; sequence PIDREIEFLP…EDQVKQEILQ (317 aa).

In terms of assembly, monomer, homodimer, and homotetramer. Forms filamentous polymers. Interacts with MID1IP1; interaction with MID1IP1 promotes oligomerization and increases its activity in a citrate-dependent manner. Biotin is required as a cofactor. It depends on Mg(2+) as a cofactor. Requires Mn(2+) as cofactor. In terms of processing, the biotin cofactor is covalently attached to the central biotinyl-binding domain and is required for the catalytic activity. Post-translationally, phosphorylation at Ser-222 by AMPK inactivates the enzyme. Required for the maintenance of skeletal muscle lipid and glucose homeostasis. Widely expressed with highest levels in heart, skeletal muscle, liver, adipose tissue, mammary gland, adrenal gland and colon. Isoform 3 is expressed in skeletal muscle, adipose tissue and liver (at protein level). Isoform 3 is detected at high levels in adipose tissue with lower levels in heart, liver, skeletal muscle and testis.

It localises to the mitochondrion. It catalyses the reaction hydrogencarbonate + acetyl-CoA + ATP = malonyl-CoA + ADP + phosphate + H(+). Its pathway is lipid metabolism; malonyl-CoA biosynthesis; malonyl-CoA from acetyl-CoA: step 1/1. Its activity is regulated as follows. Activity is increased by oligomerization of the protein into filaments. The oligomerization and the activity of the enzyme are inhibited by phosphorylation at Ser-222. Inhibited by its product, malonyl-CoA. Activated by citrate. Activation by MID1IP1 is citrate-dependent. Soraphen A, inhibits the enzyme by preventing the formation of active filamentous oligomers. Mitochondrial enzyme that catalyzes the carboxylation of acetyl-CoA to malonyl-CoA and plays a central role in fatty acid metabolism. Catalyzes a 2 steps reaction starting with the ATP-dependent carboxylation of the biotin carried by the biotin carboxyl carrier (BCC) domain followed by the transfer of the carboxyl group from carboxylated biotin to acetyl-CoA. Through the production of malonyl-CoA that allosterically inhibits carnitine palmitoyltransferase 1 at the mitochondria, negatively regulates fatty acid oxidation. Together with its cytosolic isozyme ACACA, which is involved in de novo fatty acid biosynthesis, promotes lipid storage. In Homo sapiens (Human), this protein is Acetyl-CoA carboxylase 2.